The sequence spans 393 residues: Sialyltransferase-like protein 1 (393 aa).

Residues 1–8 lie on the Cytoplasmic side of the membrane; that stretch reads MKRPLRRP. Residues 9–27 traverse the membrane as a helical; Signal-anchor for type II membrane protein segment; that stretch reads FAVLLFVVLCAAASFPSVL. The Lumenal portion of the chain corresponds to 28-393; it reads RRSVGPAPVL…IAVPPVVFYH (366 aa). N49, N212, and N258 each carry an N-linked (GlcNAc...) asparagine glycan.

Belongs to the glycosyltransferase 29 family.

The protein localises to the golgi apparatus membrane. Functionally, possesses sialyltransferase-like activity in vitro. Transfers sialic acid to the oligosaccharide Gal-beta-1,3-GalNAc and to glycoproteins such as asialofetuin, alpha-1-acid glycoprotein (NeuAc-alpha-2,3-Gal-beta-1,3-GalNAc-) and andasialo-alpha-1-acid glycoprotein. The transferred sialic acid is linked to galactose of Gal-beta-1,3-GalNAc through alpha-2,6-linkage. The chain is Sialyltransferase-like protein 1 from Oryza sativa subsp. indica (Rice).